Here is a 103-residue protein sequence, read N- to C-terminus: UPF0145 protein EF_0241 (103 aa).

Belongs to the UPF0145 family.

This chain is UPF0145 protein EF_0241, found in Enterococcus faecalis (strain ATCC 700802 / V583).